The primary structure comprises 689 residues: UvrABC system protein B (689 aa).

The interval 1-26 (MSDASGPLQPDRPEADVPFRVEAPFD) is disordered. One can recognise a Helicase ATP-binding domain in the interval 40–422 (AGYEQGAQQQ…ERAQSANVVE (383 aa)). 53–60 (GVTGSGKT) contacts ATP. The Beta-hairpin signature appears at 106-129 (YYNYYQPEAYVEQTDKYIEKDASI). Residues 443–605 (QVEDLMDRID…TTPTTIEKAV (163 aa)) enclose the Helicase C-terminal domain. In terms of domain architecture, UVR spans 632 to 667 (ALLVEDLEARMEDAASNLEFELAADIRDRMRELREA). The interval 668-689 (FDLDGGDAPEDPGGVAPETEDW) is disordered.

This sequence belongs to the UvrB family. Forms a heterotetramer with UvrA during the search for lesions. Interacts with UvrC in an incision complex.

The protein localises to the cytoplasm. In terms of biological role, the UvrABC repair system catalyzes the recognition and processing of DNA lesions. A damage recognition complex composed of 2 UvrA and 2 UvrB subunits scans DNA for abnormalities. Upon binding of the UvrA(2)B(2) complex to a putative damaged site, the DNA wraps around one UvrB monomer. DNA wrap is dependent on ATP binding by UvrB and probably causes local melting of the DNA helix, facilitating insertion of UvrB beta-hairpin between the DNA strands. Then UvrB probes one DNA strand for the presence of a lesion. If a lesion is found the UvrA subunits dissociate and the UvrB-DNA preincision complex is formed. This complex is subsequently bound by UvrC and the second UvrB is released. If no lesion is found, the DNA wraps around the other UvrB subunit that will check the other stand for damage. The protein is UvrABC system protein B of Halobacterium salinarum (strain ATCC 700922 / JCM 11081 / NRC-1) (Halobacterium halobium).